A 303-amino-acid polypeptide reads, in one-letter code: Lipase chaperone (303 aa).

A helical transmembrane segment spans residues 7 to 23 (TLAAACAAWLAWWAWPD).

It belongs to the lipase chaperone family.

It is found in the cell inner membrane. Functionally, may be involved in the folding of the extracellular lipase during its passage through the periplasm. The protein is Lipase chaperone (lifO) of Chromobacterium violaceum (strain ATCC 12472 / DSM 30191 / JCM 1249 / CCUG 213 / NBRC 12614 / NCIMB 9131 / NCTC 9757 / MK).